Here is a 468-residue protein sequence, read N- to C-terminus: 6-phosphogluconate dehydrogenase, decarboxylating (468 aa).

Residues 10-15 (GMAVMG), 33-35 (NRS), 74-76 (VKA), and Asn-102 contribute to the NADP(+) site. Residues Asn-102 and 128-130 (SGG) each bind substrate. The Proton acceptor role is filled by Lys-183. 186-187 (HN) contributes to the substrate binding site. Glu-190 (proton donor) is an active-site residue. Residues Tyr-191, Lys-260, Arg-287, Arg-445, and His-451 each coordinate substrate.

The protein belongs to the 6-phosphogluconate dehydrogenase family. In terms of assembly, homodimer.

It catalyses the reaction 6-phospho-D-gluconate + NADP(+) = D-ribulose 5-phosphate + CO2 + NADPH. It functions in the pathway carbohydrate degradation; pentose phosphate pathway; D-ribulose 5-phosphate from D-glucose 6-phosphate (oxidative stage): step 3/3. Functionally, catalyzes the oxidative decarboxylation of 6-phosphogluconate to ribulose 5-phosphate and CO(2), with concomitant reduction of NADP to NADPH. This Escherichia coli (strain K12) protein is 6-phosphogluconate dehydrogenase, decarboxylating (gnd).